Consider the following 309-residue polypeptide: Protein RTM1 (309 aa).

The next 7 helical transmembrane spans lie at 22–42 (AIALTVLFIVTTLIYSLQVVW), 83–103 (TFSAFIPLFFGCIMEIVGYIA), 119–139 (IQAVLLLIAPALYAATIYMLF), 162–182 (FFVFGDVVSFCLQAAGGGLMA), 193–213 (LITAGLVIQIVFFGVFIINEF), 233–253 (WWFLNLTLMLSSILIMVRSIV), and 278–298 (AVPMLLAAIVFIVGSFFGNIF).

The protein belongs to the lipid-translocating exporter (LTE) (TC 9.A.26.1) family.

The protein resides in the membrane. Its function is as follows. Confers resistance to molasses (to a particular toxic element present in some molasses). The polypeptide is Protein RTM1 (RTM1) (Saccharomyces cerevisiae (Baker's yeast)).